The chain runs to 90 residues: MIEKRNFALRDKEGNEIGVFSGKQPRQAALKAANRGFTDIRLRERGTKKVHIFQGERIQVPKPSNAPKWMPANIWKPNVKKLGVEKLEDI.

In terms of biological role, protects DNA against thermal denaturation and modulates transcription. This Methanothrix soehngenii (Methanosaeta concilii) protein is Chromosomal protein MC1c.